The chain runs to 134 residues: Small ribosomal subunit protein uS8c (134 aa).

Belongs to the universal ribosomal protein uS8 family. Part of the 30S ribosomal subunit.

The protein localises to the plastid. It localises to the chloroplast. Its function is as follows. One of the primary rRNA binding proteins, it binds directly to 16S rRNA central domain where it helps coordinate assembly of the platform of the 30S subunit. The polypeptide is Small ribosomal subunit protein uS8c (rps8) (Vitis vinifera (Grape)).